The primary structure comprises 436 residues: Glutamate-1-semialdehyde 2,1-aminomutase (436 aa).

Lysine 276 is subject to N6-(pyridoxal phosphate)lysine.

It belongs to the class-III pyridoxal-phosphate-dependent aminotransferase family. HemL subfamily. Homodimer. It depends on pyridoxal 5'-phosphate as a cofactor.

It is found in the cytoplasm. It catalyses the reaction (S)-4-amino-5-oxopentanoate = 5-aminolevulinate. It participates in porphyrin-containing compound metabolism; protoporphyrin-IX biosynthesis; 5-aminolevulinate from L-glutamyl-tRNA(Glu): step 2/2. It functions in the pathway porphyrin-containing compound metabolism; chlorophyll biosynthesis. The sequence is that of Glutamate-1-semialdehyde 2,1-aminomutase from Synechococcus sp. (strain JA-2-3B'a(2-13)) (Cyanobacteria bacterium Yellowstone B-Prime).